A 1461-amino-acid chain; its full sequence is Gag-Pro-Pol polyprotein (1461 aa).

A lipid anchor (N-myristoyl glycine; by host) is attached at G2. Positions 94-97 match the PTAP/PSAP motif motif; sequence PSAP. Residues 94 to 121 are disordered; the sequence is PSAPAAPVPTPICPTTTPPPPPPPSPEA. Positions 97-121 are enriched in pro residues; it reads PAAPVPTPICPTTTPPPPPPPSPEA. Positions 124–127 match the PPXY motif motif; it reads PPPY. The PTAP/PSAP motif motif lies at 130 to 133; the sequence is PTTT. 2 CCHC-type zinc fingers span residues 361–378 and 384–401; these read QPCF…DCTQ and GPCP…DCPQ. The interval 399–425 is disordered; the sequence is CPQLKPPQEEGEPLLLDLPSTSGTTEE. A Peptidase A2 domain is found at 473 to 551; it reads TQALLDTGAD…NKWTIIGRDA (79 aa). The active-site For protease activity; shared with dimeric partner is the D478. Positions 612–802 constitute a Reverse transcriptase domain; that stretch reads LEAGHIEPYS…GQIRFLGQVI (191 aa). D678, D753, D754, D1038, E1073, D1095, D1156, D1229, and D1286 together coordinate Mg(2+). The RNase H type-1 domain occupies 1029-1164; that stretch reads LDTAPCLFSD…TDSLILAPLV (136 aa). In terms of domain architecture, Integrase catalytic spans 1218 to 1387; the sequence is RGLLPNHIWQ…PPIPEASTPP (170 aa). Positions 1392–1441 form a DNA-binding region, integrase-type; it reads KWFYYKLPGLTNQRWKGPLQSLQEAAGAALLSIDGSPRWIPWRFLKKAAC.

In terms of assembly, homodimer; the homodimers are part of the immature particles. Interacts with human TSG101 and NEDD4; these interactions are essential for budding and release of viral particles. Homodimer; further assembles as homohexamers. Requires Mg(2+) as cofactor. Phosphorylation of the matrix protein p19 by MAPK1 seems to play a role in budding. Post-translationally, myristoylated. Myristoylation of the matrix (MA) domain mediates the transport and binding of Gag polyproteins to the host plasma membrane and is required for the assembly of viral particles. In terms of processing, specific enzymatic cleavages by the viral protease yield mature proteins. The polyprotein is cleaved during and after budding, this process is termed maturation. The protease is autoproteolytically processed at its N- and C-termini.

The protein localises to the virion. The enzyme catalyses Endonucleolytic cleavage to 5'-phosphomonoester.. It carries out the reaction DNA(n) + a 2'-deoxyribonucleoside 5'-triphosphate = DNA(n+1) + diphosphate. Its function is as follows. The matrix domain targets Gag, Gag-Pro and Gag-Pro-Pol polyproteins to the plasma membrane via a multipartite membrane binding signal, that includes its myristoylated N-terminus. Functionally, matrix protein. In terms of biological role, forms the spherical core of the virus that encapsulates the genomic RNA-nucleocapsid complex. Binds strongly to viral nucleic acids and promote their aggregation. Also destabilizes the nucleic acids duplexes via highly structured zinc-binding motifs. Its function is as follows. The aspartyl protease mediates proteolytic cleavages of Gag and Gag-Pol polyproteins during or shortly after the release of the virion from the plasma membrane. Cleavages take place as an ordered, step-wise cascade to yield mature proteins. This process is called maturation. Displays maximal activity during the budding process just prior to particle release from the cell (Potential). Cleaves the translation initiation factor eIF4G leading to the inhibition of host cap-dependent translation. Functionally, RT is a multifunctional enzyme that converts the viral RNA genome into dsDNA in the cytoplasm, shortly after virus entry into the cell. This enzyme displays a DNA polymerase activity that can copy either DNA or RNA templates, and a ribonuclease H (RNase H) activity that cleaves the RNA strand of RNA-DNA heteroduplexes in a partially processive 3' to 5'-endonucleasic mode. Conversion of viral genomic RNA into dsDNA requires many steps. A tRNA-Pro binds to the primer-binding site (PBS) situated at the 5'-end of the viral RNA. RT uses the 3' end of the tRNA primer to perform a short round of RNA-dependent minus-strand DNA synthesis. The reading proceeds through the U5 region and ends after the repeated (R) region which is present at both ends of viral RNA. The portion of the RNA-DNA heteroduplex is digested by the RNase H, resulting in a ssDNA product attached to the tRNA primer. This ssDNA/tRNA hybridizes with the identical R region situated at the 3' end of viral RNA. This template exchange, known as minus-strand DNA strong stop transfer, can be either intra- or intermolecular. RT uses the 3' end of this newly synthesized short ssDNA to perform the RNA-dependent minus-strand DNA synthesis of the whole template. RNase H digests the RNA template except for a polypurine tract (PPT) situated at the 5' end of the genome. It is not clear if both polymerase and RNase H activities are simultaneous. RNase H probably can proceed both in a polymerase-dependent (RNA cut into small fragments by the same RT performing DNA synthesis) and a polymerase-independent mode (cleavage of remaining RNA fragments by free RTs). Secondly, RT performs DNA-directed plus-strand DNA synthesis using the PPT that has not been removed by RNase H as primer. PPT and tRNA primers are then removed by RNase H. The 3' and 5' ssDNA PBS regions hybridize to form a circular dsDNA intermediate. Strand displacement synthesis by RT to the PBS and PPT ends produces a blunt ended, linear dsDNA copy of the viral genome that includes long terminal repeats (LTRs) at both ends. In terms of biological role, catalyzes viral DNA integration into the host chromosome, by performing a series of DNA cutting and joining reactions. The chain is Gag-Pro-Pol polyprotein (gag-pro-pol) from Human T-cell leukemia virus 2 (HTLV-2).